A 515-amino-acid polypeptide reads, in one-letter code: Zinc-binding protein AdcA (515 aa).

An N-terminal signal peptide occupies residues 1 to 28 (MKKKILLMMSLISVFFAWQLTQAKQVLA). A Zn(2+)-binding site is contributed by His66. The disordered stretch occupies residues 125–148 (DHHHEDADKKHEHNKHSEEGHNHA). The segment at 129-148 (EDADKKHEHNKHSEEGHNHA) is his-rich loop. Residues His152, His216, and Glu291 each coordinate Zn(2+).

Belongs to the bacterial solute-binding protein 9 family.

Functionally, part of the ATP-binding cassette (ABC) transport system AdcABC involved in zinc import. Binds zinc with high affinity and specificity and delivers it to the membrane permease for translocation into the cytoplasm. This chain is Zinc-binding protein AdcA (adcA), found in Streptococcus pyogenes serotype M1.